The following is a 145-amino-acid chain: uncharacterized protein (145 aa).

3 consecutive transmembrane segments (helical) span residues 3–23 (VGII…GIGG), 83–103 (YVID…YLVP), and 105–125 (LSLL…MLWI).

The protein localises to the cell membrane. This is an uncharacterized protein from Methanocaldococcus jannaschii (strain ATCC 43067 / DSM 2661 / JAL-1 / JCM 10045 / NBRC 100440) (Methanococcus jannaschii).